The sequence spans 682 residues: MPLLSQMQDQSGTTFAQLEALRQKLREYEYYYHVLDNPLVPDAEYDRLMNELKNLEWQHPEWITADSPTQRVGAKPLDGFAQVTHEIPMLSLDNAFSDEELDGFLRRMESYITEDPHTLAFCCEPKLDGLAVSILYVDGVLNQAATRGDGSTGEDITSNIRTIRNIPLKLNMDNPPARLEVRGEVFMPQKGFEALNERALEKGEKTFANPRNAAAGSLRQLDPKITRQRPLVLNAYGIGVYESDDELPVTHFERLQWLKSIGIPVNNEIRLATGREQLLAFYADIQAKRPTLGYDIDGAVLKVNDIGLQEQLGFISRSPRWAIAYKFPAQEEMTVLNDVEFQVGRTGAITPVAKLEPVFVAGVTVSNATLHNGDEIERLGIVIGDTVIIRRAGDVIPQIVGVVMERRPENAKKIEFPTACPVCESAVVRVEGEAVARCTGGLFCGAQRKEALKHFVSRKAMDIDGVGEKLIEQLMERELVHTPADLFKLEHTTLMRLERMGGKSAQNALNSIEKAKNTTLARFLFALGIRDVGEATAQNLANHFHNLDAIRAATFEQLQEVQDVGEVVANRIVRFWQEPHNVTVVEDLISQGIHWQDVVQVEIADNPLKGKSVVLTGTLTQLTRDQAKALLQSFGCKVSGSVSSKTDYLIAGEKAGSKLTKAQELGVKVLTEQEFIALTGEN.

Residues 42-46 (DAEYD), 91-92 (SL), and Glu124 contribute to the NAD(+) site. The active-site N6-AMP-lysine intermediate is Lys126. 4 residues coordinate NAD(+): Arg147, Glu184, Lys302, and Lys326. Zn(2+) contacts are provided by Cys420, Cys423, Cys438, and Cys444. The 80-residue stretch at 603-682 (IADNPLKGKS…QEFIALTGEN (80 aa)) folds into the BRCT domain.

It belongs to the NAD-dependent DNA ligase family. LigA subfamily. Mg(2+) is required as a cofactor. Mn(2+) serves as cofactor.

The catalysed reaction is NAD(+) + (deoxyribonucleotide)n-3'-hydroxyl + 5'-phospho-(deoxyribonucleotide)m = (deoxyribonucleotide)n+m + AMP + beta-nicotinamide D-nucleotide.. Its function is as follows. DNA ligase that catalyzes the formation of phosphodiester linkages between 5'-phosphoryl and 3'-hydroxyl groups in double-stranded DNA using NAD as a coenzyme and as the energy source for the reaction. It is essential for DNA replication and repair of damaged DNA. The sequence is that of DNA ligase from Actinobacillus pleuropneumoniae serotype 7 (strain AP76).